A 311-amino-acid chain; its full sequence is tRNA dimethylallyltransferase (311 aa).

Residue 11 to 18 participates in ATP binding; sequence GPTAVGKT. Residue 13–18 coordinates substrate; it reads TAVGKT. The segment at 36 to 39 is interaction with substrate tRNA; it reads DSVQ.

It belongs to the IPP transferase family. Monomer. The cofactor is Mg(2+).

It catalyses the reaction adenosine(37) in tRNA + dimethylallyl diphosphate = N(6)-dimethylallyladenosine(37) in tRNA + diphosphate. Catalyzes the transfer of a dimethylallyl group onto the adenine at position 37 in tRNAs that read codons beginning with uridine, leading to the formation of N6-(dimethylallyl)adenosine (i(6)A). This chain is tRNA dimethylallyltransferase, found in Exiguobacterium sp. (strain ATCC BAA-1283 / AT1b).